Consider the following 456-residue polypeptide: Trigger factor (456 aa).

The PPIase FKBP-type domain occupies 192 to 277 (GDTVVIDFVG…IHEVKTKEVP (86 aa)).

The protein belongs to the FKBP-type PPIase family. Tig subfamily.

It is found in the cytoplasm. The catalysed reaction is [protein]-peptidylproline (omega=180) = [protein]-peptidylproline (omega=0). Functionally, involved in protein export. Acts as a chaperone by maintaining the newly synthesized protein in an open conformation. Functions as a peptidyl-prolyl cis-trans isomerase. This chain is Trigger factor, found in Streptococcus pyogenes serotype M4 (strain MGAS10750).